Consider the following 604-residue polypeptide: MNKTKGFTKYKKMRYIPGLDGLRAIAVLGIIIYHLNKQWLTGGFLGVDTFFVISGYLITSLLLKEYDDTGIIKLKSFWIRRLKRLLPAVIVLLMVVGTATLLLKSDNIIRVKHDIIAAIFYVSNWWYIAKDVNYFEQFSFMPLKHLWSLAIEEQFYIFFPVILVTLLLTIKKRYKIGFIFWGVSIISLGLMMFIYSINGDHSRVYFGTDTRLQTLLLGVILAFLWPPFKLKNDPPKVVKYVIDSIGSLSFIVLILLFFIINDETNWIYDGGFYLISILTLFIIASVVHPSTWIAKIFSNPVLVFIGKRSYSLYLWHFAVISFVHSYYVDGQIPVYVYFIDISLTIIFAELSYRFIETPFRKEGIKALNWRPSYIPQFIRMAIVVTLLIPFMLILVGAFNKYGKDIIGEKANSFDTTIEDNYLMRIAPIDNIHIDGLVSEKKKESSDVYNNIKPLLIGDSVMVDIGESFKSSVPKSRIDGKVGRQLYQTLPLVKANYSQYKKSSDQVVLELGTNGDFTVKQLDDLLNQFGKAKIYLVNTRVPRIYEANVNRLLADAAKRKSNVTLIDWYKRSQGHSEYFAPDGVHLEYKGVLALKDEILKALKKK.

11 consecutive transmembrane segments (helical) span residues 15–35, 43–63, 85–105, 150–170, 176–196, 212–232, 240–260, 267–287, 310–330, 332–352, and 377–397; these read YIPG…IYHL, GFLG…SLLL, LLPA…LLKS, AIEE…LLTI, IGFI…FIYS, LQTL…KLKN, YVID…FFII, IYDG…ASVV, YSLY…YVDG, IPVY…ELSY, and FIRM…LVGA. Residues Ser-459, Asp-581, and His-584 contribute to the active site.

The protein belongs to the acyltransferase 3 family.

The protein localises to the cell membrane. This chain is Putative O-acetyltransferase SACOL0978, found in Staphylococcus aureus (strain COL).